Here is a 485-residue protein sequence, read N- to C-terminus: Probable alginate O-acetylase AlgI (485 aa).

The next 9 helical transmembrane spans lie at 7-24 (VFLF…YLSG), 39-61 (FYAW…NYWI), 78-100 (WLLL…NFGV), 115-137 (FILT…ISYI), 150-172 (NLID…VLRF), 312-334 (FLTM…WGAW), 360-382 (AFTF…HVAA), 402-424 (AQLT…FFGL), and 461-483 (ILLL…FLYF). His322 is a catalytic residue.

The protein belongs to the membrane-bound acyltransferase family.

Its subcellular location is the cell inner membrane. Its pathway is glycan biosynthesis; alginate biosynthesis. Functionally, together with AlgJ and AlgF, forms an inner membrane complex which probably interacts with the alginate polymerization-transport complex and adds acetyl groups at the O-2 and O-3 positions of mannuronate residues. Acetylation of alginate is important for the architecture of biofilms and increases the ability of alginate to act as a defense barrier. The sequence is that of Probable alginate O-acetylase AlgI (algI) from Pseudomonas putida (strain ATCC 47054 / DSM 6125 / CFBP 8728 / NCIMB 11950 / KT2440).